The chain runs to 255 residues: Altered inheritance of mitochondria protein 36, mitochondrial (255 aa).

A mitochondrion-targeting transit peptide spans 1–40 (MLRPLRKSVLASCRHCFKVCGGLPQKQLPLFSPLLLRARY). The helical transmembrane segment at 64–82 (IFLVAIIGTVIFVKTVQSL) threads the bilayer.

This sequence belongs to the AIM36 family.

It localises to the mitochondrion membrane. In Saccharomyces cerevisiae (strain RM11-1a) (Baker's yeast), this protein is Altered inheritance of mitochondria protein 36, mitochondrial (AIM36).